The sequence spans 402 residues: MDYKQLKQEFNTPFYIYNFDFIKERFLNLKEAFKARKSQIFYAVKANSNLSLLQMLANLDSGFDCVSIGEVKRALKAGAKAYKIIFSGVGKTKEELRQALEYDILYINLESEAEMMLLESVAKELNLKARISIRVNPNVDAKTHPYISTGLNENKFGVEIDIARKMYLYAKNSSFLEPVGVHFHIGSQLLDISPIHEAAAIVAKLVRELKALQIDLKFFDIGGGLGVAYEKNECEPDLYDYAQGILAQLHGLDLTIGMEPGRYLVAKSGEFVCSVLYEKQNKTKRFVVVDGAMNDLIRPSLYEAYHEIILPYNQGEESLCDVVGGICESGDFFAKARSLPSTQSDDIMVIKNTGAYGFSMSSNYNTRNKVCELALEEGQVRLIRQRENFEDQIALEEKFLKA.

Position 45 is an N6-(pyridoxal phosphate)lysine (lysine 45). Residues glycine 224 and 259–262 each bind pyridoxal 5'-phosphate; that span reads EPGR. The substrate site is built by arginine 262, arginine 298, and tyrosine 302. Catalysis depends on cysteine 327, which acts as the Proton donor. Positions 328 and 356 each coordinate substrate. A pyridoxal 5'-phosphate-binding site is contributed by tyrosine 356.

The protein belongs to the Orn/Lys/Arg decarboxylase class-II family. LysA subfamily. As to quaternary structure, homodimer. Pyridoxal 5'-phosphate serves as cofactor.

The catalysed reaction is meso-2,6-diaminopimelate + H(+) = L-lysine + CO2. Its pathway is amino-acid biosynthesis; L-lysine biosynthesis via DAP pathway; L-lysine from DL-2,6-diaminopimelate: step 1/1. Specifically catalyzes the decarboxylation of meso-diaminopimelate (meso-DAP) to L-lysine. The sequence is that of Diaminopimelate decarboxylase from Campylobacter jejuni subsp. jejuni serotype O:2 (strain ATCC 700819 / NCTC 11168).